Reading from the N-terminus, the 234-residue chain is 1-(5-phosphoribosyl)-5-[(5-phosphoribosylamino)methylideneamino] imidazole-4-carboxamide isomerase (234 aa).

The active-site Proton acceptor is Asp9. Asp131 functions as the Proton donor in the catalytic mechanism.

The protein belongs to the HisA/HisF family.

It localises to the cytoplasm. The catalysed reaction is 1-(5-phospho-beta-D-ribosyl)-5-[(5-phospho-beta-D-ribosylamino)methylideneamino]imidazole-4-carboxamide = 5-[(5-phospho-1-deoxy-D-ribulos-1-ylimino)methylamino]-1-(5-phospho-beta-D-ribosyl)imidazole-4-carboxamide. The protein operates within amino-acid biosynthesis; L-histidine biosynthesis; L-histidine from 5-phospho-alpha-D-ribose 1-diphosphate: step 4/9. The protein is 1-(5-phosphoribosyl)-5-[(5-phosphoribosylamino)methylideneamino] imidazole-4-carboxamide isomerase of Staphylococcus saprophyticus subsp. saprophyticus (strain ATCC 15305 / DSM 20229 / NCIMB 8711 / NCTC 7292 / S-41).